Consider the following 445-residue polypeptide: Chromosome partition protein MukF (445 aa).

Residues 213 to 241 (LSETSNTLKELQDTLQAAGDELQTQILDI) form a leucine-zipper region.

Belongs to the MukF family. Interacts, and probably forms a ternary complex, with MukE and MukB via its C-terminal region. The complex formation is stimulated by calcium or magnesium. It is required for an interaction between MukE and MukB.

Its subcellular location is the cytoplasm. It localises to the nucleoid. Its function is as follows. Involved in chromosome condensation, segregation and cell cycle progression. May participate in facilitating chromosome segregation by condensation DNA from both sides of a centrally located replisome during cell division. Not required for mini-F plasmid partitioning. Probably acts via its interaction with MukB and MukE. Overexpression results in anucleate cells. It has a calcium binding activity. This Vibrio vulnificus (strain YJ016) protein is Chromosome partition protein MukF.